We begin with the raw amino-acid sequence, 320 residues long: ATP-dependent 6-phosphofructokinase (320 aa).

ATP is bound at residue G12. 22–26 (RGVVR) serves as a coordination point for ADP. Residues 73 to 74 (RF) and 103 to 106 (GDGS) contribute to the ATP site. D104 provides a ligand contact to Mg(2+). 126 to 128 (TID) is a binding site for substrate. Catalysis depends on D128, which acts as the Proton acceptor. An ADP-binding site is contributed by R155. Residues R163 and 170 to 172 (MGR) each bind substrate. ADP-binding positions include 186-188 (GCE), K212, and 214-216 (KKH). Substrate-binding positions include E223, R244, and 250–253 (HIQR).

It belongs to the phosphofructokinase type A (PFKA) family. ATP-dependent PFK group I subfamily. Prokaryotic clade 'B1' sub-subfamily. In terms of assembly, homotetramer. Requires Mg(2+) as cofactor.

It localises to the cytoplasm. The enzyme catalyses beta-D-fructose 6-phosphate + ATP = beta-D-fructose 1,6-bisphosphate + ADP + H(+). Its pathway is carbohydrate degradation; glycolysis; D-glyceraldehyde 3-phosphate and glycerone phosphate from D-glucose: step 3/4. Allosterically activated by ADP and other diphosphonucleosides, and allosterically inhibited by phosphoenolpyruvate. Catalyzes the phosphorylation of D-fructose 6-phosphate to fructose 1,6-bisphosphate by ATP, the first committing step of glycolysis. This Vibrio campbellii (strain ATCC BAA-1116) protein is ATP-dependent 6-phosphofructokinase.